We begin with the raw amino-acid sequence, 391 residues long: Multidrug resistance protein MdtL (391 aa).

Transmembrane regions (helical) follow at residues 4–24, 42–62, 69–89, 93–113, 131–151, 158–178, 203–222, 245–265, 269–289, 293–313, 331–351, and 356–376; these read FLICSFALVLLYPAGIDMYLV, IAFSVYLAGMAAAMLFAGKVA, PVAIPGAALFIIASVFCSLAE, LFLAGRFLQGLGAGCCYVVAF, LLNGITCIIPVLAPVLGHLIM, SLFWTMATMGIAVLMLSLFIL, FFLSRVVITTLSVSVILTFV, ALTAGVSMTVSFSTPFALGIF, TLMITSQVLFLAAGITLAVSP, VSLFGITLICAGFSVGFGVAM, LGIAQVCGSSLWIWLAAVVGI, and MLIGILIACSIVSLLLIMFVA.

This sequence belongs to the major facilitator superfamily. DHA1 family. MdtL (TC 2.A.1.2.22) subfamily.

Its subcellular location is the cell inner membrane. Confers resistance to chloramphenicol. This is Multidrug resistance protein MdtL from Escherichia coli (strain SMS-3-5 / SECEC).